The chain runs to 40 residues: Large ribosomal subunit protein bL36A (40 aa).

Belongs to the bacterial ribosomal protein bL36 family.

This is Large ribosomal subunit protein bL36A from Saccharopolyspora erythraea (strain ATCC 11635 / DSM 40517 / JCM 4748 / NBRC 13426 / NCIMB 8594 / NRRL 2338).